The sequence spans 1337 residues: Multidrug resistance protein fer6 (1337 aa).

A signal peptide spans Met1 to Thr23. An N-linked (GlcNAc...) asparagine glycan is attached at Asn71. Transmembrane regions (helical) follow at residues Phe94–Leu114 and Leu138–Leu158. The region spanning Trp95 to Asp386 is the ABC transmembrane type-1 1 domain. Asn187 is a glycosylation site (N-linked (GlcNAc...) asparagine). Helical transmembrane passes span Phe220–Leu242, Leu247–Ala269, Ala331–Val351, and Ile359–Ile379. Residues Ile417–Thr667 form the ABC transporter 1 domain. The tract at residues Ala432–Thr460 is disordered. Over residues Val438–Val455 the composition is skewed to basic and acidic residues. Asn465 is a glycosylation site (N-linked (GlcNAc...) asparagine). Residue Gly478–Ser485 participates in ATP binding. A disordered region spans residues Gly699–Met751. The segment covering Ser700 to Ala718 has biased composition (low complexity). A glycan (N-linked (GlcNAc...) asparagine) is linked at Asn731. 6 helical membrane-spanning segments follow: residues Tyr769 to Phe789, Gly817 to Phe837, Ala890 to Ala909, Phe915 to Tyr933, Leu999 to Val1019, and Gly1028 to Ile1048. Residues Leu781–Asn1056 form the ABC transmembrane type-1 2 domain. Asn1057 carries an N-linked (GlcNAc...) asparagine glycan. In terms of domain architecture, ABC transporter 2 spans Ile1097–Asp1325. Gly1131–Ser1138 is a binding site for ATP. An N-linked (GlcNAc...) asparagine glycan is attached at Asn1227.

It belongs to the ABC transporter superfamily. ABCC family. Conjugate transporter (TC 3.A.1.208) subfamily.

The protein localises to the membrane. Its function is as follows. Multidrug resistance protein; part of the gene cluster that mediates the biosynthesis of siderophore ferrichrome A which is contributing to organismal virulence. In Mycosarcoma maydis (Corn smut fungus), this protein is Multidrug resistance protein fer6.